The primary structure comprises 343 residues: Phosphate acyltransferase (343 aa).

The protein belongs to the PlsX family. In terms of assembly, homodimer. Probably interacts with PlsY.

Its subcellular location is the cytoplasm. The catalysed reaction is a fatty acyl-[ACP] + phosphate = an acyl phosphate + holo-[ACP]. It participates in lipid metabolism; phospholipid metabolism. Catalyzes the reversible formation of acyl-phosphate (acyl-PO(4)) from acyl-[acyl-carrier-protein] (acyl-ACP). This enzyme utilizes acyl-ACP as fatty acyl donor, but not acyl-CoA. The sequence is that of Phosphate acyltransferase from Coxiella burnetii (strain CbuG_Q212) (Coxiella burnetii (strain Q212)).